A 135-amino-acid chain; its full sequence is Small ribosomal subunit protein uS12c (135 aa).

Belongs to the universal ribosomal protein uS12 family. In terms of assembly, part of the 30S ribosomal subunit.

It localises to the plastid. It is found in the chloroplast. Its function is as follows. With S4 and S5 plays an important role in translational accuracy. Located at the interface of the 30S and 50S subunits. This is Small ribosomal subunit protein uS12c (rps12) from Adiantum capillus-veneris (Maidenhair fern).